A 269-amino-acid chain; its full sequence is 2-dehydro-3-deoxyphosphooctonate aldolase (269 aa).

The protein belongs to the KdsA family.

Its subcellular location is the cytoplasm. The catalysed reaction is D-arabinose 5-phosphate + phosphoenolpyruvate + H2O = 3-deoxy-alpha-D-manno-2-octulosonate-8-phosphate + phosphate. Its pathway is carbohydrate biosynthesis; 3-deoxy-D-manno-octulosonate biosynthesis; 3-deoxy-D-manno-octulosonate from D-ribulose 5-phosphate: step 2/3. The protein operates within bacterial outer membrane biogenesis; lipopolysaccharide biosynthesis. This chain is 2-dehydro-3-deoxyphosphooctonate aldolase, found in Chlamydia caviae (strain ATCC VR-813 / DSM 19441 / 03DC25 / GPIC) (Chlamydophila caviae).